The chain runs to 189 residues: Adenylate kinase (189 aa).

11-16 (GSGKGT) lines the ATP pocket. The NMP stretch occupies residues 31 to 60 (STGDVLRAEIKKGTELGKTAKGYIDQGQLL). AMP is bound by residues threonine 32, arginine 37, 58 to 60 (QLL), 86 to 89 (GFPR), and glutamine 93. An LID region spans residues 127 to 137 (KRGQESGRADD). Arginine 128 lines the ATP pocket. 2 residues coordinate AMP: arginine 134 and arginine 145. Glycine 173 contacts ATP.

Belongs to the adenylate kinase family. Monomer.

It is found in the cytoplasm. The catalysed reaction is AMP + ATP = 2 ADP. It participates in purine metabolism; AMP biosynthesis via salvage pathway; AMP from ADP: step 1/1. Its function is as follows. Catalyzes the reversible transfer of the terminal phosphate group between ATP and AMP. Plays an important role in cellular energy homeostasis and in adenine nucleotide metabolism. This is Adenylate kinase from Phocaeicola vulgatus (strain ATCC 8482 / DSM 1447 / JCM 5826 / CCUG 4940 / NBRC 14291 / NCTC 11154) (Bacteroides vulgatus).